We begin with the raw amino-acid sequence, 80 residues long: RNA-binding protein KhpA (80 aa).

Residues 33-80 (GRTVEVHVHPDDLGKVIGRGGRTATALRKLVAGIGGRGIRVDVVDTDQ) form the KH domain.

The protein belongs to the KhpA RNA-binding protein family.

The protein localises to the cytoplasm. Functionally, a probable RNA-binding protein. The polypeptide is RNA-binding protein KhpA (Mycobacterium leprae (strain TN)).